Consider the following 480-residue polypeptide: Ribosomal protein uS12 methylthiotransferase RimO (480 aa).

Residues 37 to 147 (NRIGFVSLGC…VLKHVHKYVP (111 aa)) form the MTTase N-terminal domain. Residues C46, C82, C111, C179, C183, and C186 each coordinate [4Fe-4S] cluster. The 238-residue stretch at 165-402 (LTPKHYAYLK…MEVQAEISAE (238 aa)) folds into the Radical SAM core domain. Positions 405 to 471 (ARFVGRTMDI…EHDLWAELVD (67 aa)) constitute a TRAM domain.

It belongs to the methylthiotransferase family. RimO subfamily. It depends on [4Fe-4S] cluster as a cofactor.

Its subcellular location is the cytoplasm. It catalyses the reaction L-aspartate(89)-[ribosomal protein uS12]-hydrogen + (sulfur carrier)-SH + AH2 + 2 S-adenosyl-L-methionine = 3-methylsulfanyl-L-aspartate(89)-[ribosomal protein uS12]-hydrogen + (sulfur carrier)-H + 5'-deoxyadenosine + L-methionine + A + S-adenosyl-L-homocysteine + 2 H(+). In terms of biological role, catalyzes the methylthiolation of an aspartic acid residue of ribosomal protein uS12. The chain is Ribosomal protein uS12 methylthiotransferase RimO from Shewanella sp. (strain ANA-3).